Here is a 456-residue protein sequence, read N- to C-terminus: MSSQIKQVFARQILDSRGNPTVEVDVVLESGAFGRAAVPSGASTGIREALELRDGNKALFLGKSVYKAVENVNTKIAQAVKGLDALDQRLIDKTMIELDGSENKKNLGANAILGVSLATARAAASHLRKPFYRYLMDVKEYLMPVPMMNVINGGSHADNNVDMQEFMIVPAGFDTFSEALRCGTEVFHTLKKVLIADGYSVAGVGDEGGYAPDLPSNEAAIEAILKAVKEAGYEPGKHVFIALDPASSEFYKDGKYELKSENKSLTTEEMIDYYAAWVEKYPIVSIEDGLAEEDWAGWKLLTEKLGNKVQLVGDDLFVTNPSILAKGIEKGIANSILIKLNQIGTLTETFEAMAMAGQAGYTCVVSHRSGETSDTIIADLAVATCSGQIKTGSLSRSDRIAKYNQLLRIEEELGENAIYPGIKAFVFNSDEEVEEVVQEIIVEDSEAEKVVVQVEE.

Position 164 (Q164) interacts with (2R)-2-phosphoglycerate. E207 (proton donor) is an active-site residue. Mg(2+)-binding residues include D244, E287, and D314. Positions 339, 368, 369, and 390 each coordinate (2R)-2-phosphoglycerate. The active-site Proton acceptor is K339.

The protein belongs to the enolase family. As to quaternary structure, component of the RNA degradosome, a multiprotein complex involved in RNA processing and mRNA degradation. Mg(2+) serves as cofactor.

Its subcellular location is the cytoplasm. It localises to the secreted. The protein localises to the cell surface. It carries out the reaction (2R)-2-phosphoglycerate = phosphoenolpyruvate + H2O. It functions in the pathway carbohydrate degradation; glycolysis; pyruvate from D-glyceraldehyde 3-phosphate: step 4/5. Catalyzes the reversible conversion of 2-phosphoglycerate (2-PG) into phosphoenolpyruvate (PEP). It is essential for the degradation of carbohydrates via glycolysis. The polypeptide is Enolase (Francisella tularensis subsp. holarctica (strain OSU18)).